A 192-amino-acid chain; its full sequence is MRDMIIVVPIGEVPSDVLSFLSENIESFYMKFGIGVKIIGSLPISAFSHAYDFYRNQYLARHFLPALSIIRRDYKALAVMGVTEVDLYESGLNFIFGIAHPGFGVALISLHRLYPEFYGEPPDRKLLKERALKEAMHELGHVFGLEHCPNPKCVMHFSNSIIDTDIKSWMYCKNCLRKLEERLGRGYVRGRT.

Position 137 (H137) interacts with Zn(2+). The active-site Proton acceptor is E138. 6 residues coordinate Zn(2+): H141, H147, C148, C153, C172, and C175.

Belongs to the peptidase M54 family. As to quaternary structure, monomer. It depends on Zn(2+) as a cofactor.

Functionally, probable zinc metalloprotease whose natural substrate is unknown. The sequence is that of Archaemetzincin from Pyrococcus furiosus (strain ATCC 43587 / DSM 3638 / JCM 8422 / Vc1).